A 487-amino-acid chain; its full sequence is 3-octaprenyl-4-hydroxybenzoate carboxy-lyase (487 aa).

Residue asparagine 172 participates in Mn(2+) binding. Residues 175–177, 189–191, and 194–195 contribute to the prenylated FMN site; these read IYR, RWL, and RG. Glutamate 238 lines the Mn(2+) pocket. Aspartate 287 serves as the catalytic Proton donor.

It belongs to the UbiD family. Homohexamer. Prenylated FMN serves as cofactor. The cofactor is Mn(2+).

Its subcellular location is the cell membrane. The catalysed reaction is a 4-hydroxy-3-(all-trans-polyprenyl)benzoate + H(+) = a 2-(all-trans-polyprenyl)phenol + CO2. It participates in cofactor biosynthesis; ubiquinone biosynthesis. Its function is as follows. Catalyzes the decarboxylation of 3-octaprenyl-4-hydroxy benzoate to 2-octaprenylphenol, an intermediate step in ubiquinone biosynthesis. This Nitrosospira multiformis (strain ATCC 25196 / NCIMB 11849 / C 71) protein is 3-octaprenyl-4-hydroxybenzoate carboxy-lyase.